Consider the following 222-residue polypeptide: Thiol:disulfide interchange protein DsbL (222 aa).

Residues 1 to 27 form the signal peptide; sequence MSAKWINSIFKSVVLTAALALPFTASA. In terms of domain architecture, Thioredoxin spans 28–221; it reads FTEGTDYMVL…MAQLVRELAT (194 aa). An intrachain disulfide couples cysteine 56 to cysteine 59.

The protein belongs to the thioredoxin family. DsbL subfamily. In terms of assembly, interacts with DsbI.

It localises to the periplasm. Involved in disulfide-bond formation. Acts by transferring its disulfide bond to other proteins. Part of a redox system composed of DsbI and DsbL that mediates formation of an essential disulfide bond in AssT. The chain is Thiol:disulfide interchange protein DsbL from Lelliottia amnigena (Enterobacter amnigenus).